Here is a 132-residue protein sequence, read N- to C-terminus: Global transcriptional regulator Spx 2 (132 aa).

Cysteines 10 and 13 form a disulfide.

This sequence belongs to the ArsC family. Spx subfamily. Interacts with the C-terminal domain of the alpha subunit of the RNAP.

The protein localises to the cytoplasm. In terms of biological role, global transcriptional regulator that plays a key role in stress response and exerts either positive or negative regulation of genes. Acts by interacting with the C-terminal domain of the alpha subunit of the RNA polymerase (RNAP). This interaction can enhance binding of RNAP to the promoter region of target genes and stimulate their transcription, or block interaction of RNAP with activator. The chain is Global transcriptional regulator Spx 2 from Lactococcus lactis subsp. lactis (strain IL1403) (Streptococcus lactis).